Consider the following 25-residue polypeptide: Pancreatic triacylglycerol lipase (25 aa).

The cysteines at positions 4 and 10 are disulfide-linked.

It belongs to the AB hydrolase superfamily. Lipase family. Forms a 1:1 stoichiometric complex with (pro)colipase/CLPS.

The protein resides in the secreted. The catalysed reaction is a triacylglycerol + H2O = a diacylglycerol + a fatty acid + H(+). It carries out the reaction 1,2,3-tributanoylglycerol + H2O = dibutanoylglycerol + butanoate + H(+). The enzyme catalyses 1,2,3-tri-(9Z-octadecenoyl)-glycerol + H2O = di-(9Z)-octadecenoylglycerol + (9Z)-octadecenoate + H(+). It catalyses the reaction all-trans-retinyl hexadecanoate + H2O = all-trans-retinol + hexadecanoate + H(+). The catalysed reaction is 1,2-di-(9Z-octadecenoyl)-glycerol + H2O = (9Z-octadecenoyl)-glycerol + (9Z)-octadecenoate + H(+). With respect to regulation, inhibited by bile salts, is reactivated by (pro)colipase/CLPS. Plays an important role in fat metabolism. It preferentially splits the esters of long-chain fatty acids at positions 1 and 3, producing mainly 2-monoacylglycerol and free fatty acids, and shows considerably higher activity against insoluble emulsified substrates than against soluble ones. This Felis catus (Cat) protein is Pancreatic triacylglycerol lipase (PNLIP).